Reading from the N-terminus, the 89-residue chain is Small ribosomal subunit protein uS15 (89 aa).

The protein belongs to the universal ribosomal protein uS15 family. As to quaternary structure, part of the 30S ribosomal subunit. Forms a bridge to the 50S subunit in the 70S ribosome, contacting the 23S rRNA.

Its function is as follows. One of the primary rRNA binding proteins, it binds directly to 16S rRNA where it helps nucleate assembly of the platform of the 30S subunit by binding and bridging several RNA helices of the 16S rRNA. In terms of biological role, forms an intersubunit bridge (bridge B4) with the 23S rRNA of the 50S subunit in the ribosome. This chain is Small ribosomal subunit protein uS15, found in Herminiimonas arsenicoxydans.